Here is a 511-residue protein sequence, read N- to C-terminus: Glucans biosynthesis protein G (511 aa).

A signal peptide spans 1-22 (MMKMRWLSAAVMLTLYTSSSWA).

The protein belongs to the OpgD/OpgG family.

The protein localises to the periplasm. It participates in glycan metabolism; osmoregulated periplasmic glucan (OPG) biosynthesis. Its function is as follows. Involved in the biosynthesis of osmoregulated periplasmic glucans (OPGs). In Escherichia fergusonii (strain ATCC 35469 / DSM 13698 / CCUG 18766 / IAM 14443 / JCM 21226 / LMG 7866 / NBRC 102419 / NCTC 12128 / CDC 0568-73), this protein is Glucans biosynthesis protein G.